We begin with the raw amino-acid sequence, 613 residues long: Vitamin B12 transporter BtuB (613 aa).

An N-terminal signal peptide occupies residues 1–22 (MQKSLLAIAMASLLTPISYLHA). The TonB box signature appears at 29 to 36 (DTVVVTAN). The 114-residue stretch at 41-154 (VESSVLASIS…IGGVIHIKTI (114 aa)) folds into the TBDR plug domain. The region spanning 159–613 (QTKHDANLGY…NWFATVNYRF (455 aa)) is the TBDR beta-barrel domain. The TonB C-terminal box signature appears at 591-613 (HSSGGKYYVGEGRNWFATVNYRF).

The protein belongs to the TonB-dependent receptor family. BtuB (TC 1.B.14.3.1) subfamily.

Its subcellular location is the cell outer membrane. Its function is as follows. Involved in the active translocation of vitamin B12 (cyanocobalamin) across the outer membrane to the periplasmic space. It derives its energy for transport by interacting with the trans-periplasmic membrane protein TonB. This is Vitamin B12 transporter BtuB from Vibrio vulnificus (strain YJ016).